A 576-amino-acid chain; its full sequence is Interleukin-1 receptor type 1 (576 aa).

A signal peptide spans 1 to 19; it reads MENMKVLLGFICLIVPLLS. Ig-like C2-type domains are found at residues 20–115, 121–217, and 229–331; these read LETD…ITMS, PGLC…RVIT, and PVIM…VRLV. Residues 20 to 338 are Extracellular-facing; it reads LETDKCTEYP…RLVYPVPDFK (319 aa). Disulfide bonds link Cys25–Cys107, Cys46–Cys99, and Cys145–Cys199. Asn63 and Asn103 each carry an N-linked (GlcNAc...) asparagine glycan. N-linked (GlcNAc...) asparagine glycosylation is found at Asn236, Asn252, and Asn266. Cys251 and Cys315 are disulfide-bonded. A helical transmembrane segment spans residues 339 to 359; that stretch reads NYLIGGFAIFTATAVFCACIY. Residues 360–576 lie on the Cytoplasmic side of the membrane; it reads KVFKVDIVLW…LQAETHLPLG (217 aa). A TIR domain is found at 386–541; it reads RTYDAYVLYP…RFWKNLRYQM (156 aa). Glu473 is a catalytic residue. Tyr499 bears the Phosphotyrosine mark. Phosphothreonine; by PKC is present on Thr556.

The protein belongs to the interleukin-1 receptor family. In terms of assembly, the interleukin-1 receptor complex is a heterodimer of IL1R1 and IL1RAP. Interacts with PIK3R1. Interacts with IL1A. In terms of processing, a soluble form (sIL1R1) is probably produced by proteolytic cleavage at the cell surface (shedding). Rapidly phosphorylated on Tyr-499 in response to IL-1, which creates a SH2 binding site for the PI 3-kinase regulatory subunit PIK3R1.

The protein resides in the membrane. It localises to the cell membrane. The protein localises to the secreted. It catalyses the reaction NAD(+) + H2O = ADP-D-ribose + nicotinamide + H(+). Receptor for IL1A, IL1B and IL1RN. After binding to interleukin-1 associates with the coreceptor IL1RAP to form the high affinity interleukin-1 receptor complex which mediates interleukin-1-dependent activation of NF-kappa-B, MAPK and other pathways. Signaling involves the recruitment of adapter molecules such as TOLLIP, MYD88, and IRAK1 or IRAK2 via the respective TIR domains of the receptor/coreceptor subunits. Binds ligands with comparable affinity and binding of antagonist IL1RN prevents association with IL1RAP to form a signaling complex. Involved in IL1B-mediated costimulation of IFNG production from T-helper 1 (Th1) cells. The sequence is that of Interleukin-1 receptor type 1 (Il1r1) from Rattus norvegicus (Rat).